A 294-amino-acid polypeptide reads, in one-letter code: Elongation factor Ts (294 aa).

Positions 79–82 (TDFV) are involved in Mg(2+) ion dislocation from EF-Tu.

It belongs to the EF-Ts family.

The protein resides in the cytoplasm. Functionally, associates with the EF-Tu.GDP complex and induces the exchange of GDP to GTP. It remains bound to the aminoacyl-tRNA.EF-Tu.GTP complex up to the GTP hydrolysis stage on the ribosome. This Shouchella clausii (strain KSM-K16) (Alkalihalobacillus clausii) protein is Elongation factor Ts.